The following is a 586-amino-acid chain: Transcription elongation regulator 1-like protein (586 aa).

The interval 1–30 (MQAGARFQRRRRQLQQQQPRRRQPLLWPMD) is disordered. Positions 7–23 (FQRRRRQLQQQQPRRRQ) are enriched in basic residues. The WW 1 domain maps to 148–181 (TPIGKSWIDKRIPNCKIFFNNSFALDSTWIHPEE). 2 disordered regions span residues 281–344 (TSPV…PGSP) and 378–448 (DLNR…QILL). A compositionally biased stretch (basic and acidic residues) spans 306 to 317 (KSRDGDKEDKEP). A WW 2 domain is found at 339–372 (PVPGSPWCVVWTGDDRVFFFNPTMHLSVWEKPMD). 3 stretches are compositionally biased toward basic and acidic residues: residues 378–387 (DLNRIIEDPP), 411–421 (DQDVKTKRNRT), and 428–439 (KPEEAKREDKGT). 2 FF domains span residues 450–503 (LEER…FVKT) and 515–570 (KLLL…FILI).

This chain is Transcription elongation regulator 1-like protein (TCERG1L), found in Homo sapiens (Human).